A 70-amino-acid chain; its full sequence is Small, acid-soluble spore protein I (70 aa).

The protein belongs to the SspI family.

It is found in the spore core. The sequence is that of Small, acid-soluble spore protein I from Bacillus licheniformis (strain ATCC 14580 / DSM 13 / JCM 2505 / CCUG 7422 / NBRC 12200 / NCIMB 9375 / NCTC 10341 / NRRL NRS-1264 / Gibson 46).